Consider the following 549-residue polypeptide: Cytochrome c oxidase subunit 1 (549 aa).

Residues 18-38 (LCYLLVAILSGFVGYVYSLFI) traverse the membrane as a helical segment. 2 residues coordinate Ca(2+): Glu41 and Gly46. The helical transmembrane segment at 42 to 62 (LSLIGCGILFGDYQFYNVLIT) threads the bilayer. A Fe(II)-heme a-binding site is contributed by His64. 5 consecutive transmembrane segments (helical) span residues 66-86 (LIMVFAFIMPVMMGGLVNYFI), 100-120 (LNNMSFWMYLAGFGCVVNGFL), 148-168 (FVMFAVHLLGISSILNSINLL), 186-206 (LFIWAALITAILLIITLPVLA), and 222-242 (FYDVVGGGDLILFQHIFWFFG). A Cu cation-binding site is contributed by His243. A cross-link (1'-histidyl-3'-tyrosine (His-Tyr)) is located at residues 243–247 (HPEVY). A run of 2 helical transmembrane segments spans residues 246–266 (VYIILLPVFGLISTIVEVIGF) and 269–289 (VFSTVAMIYSMILIAILGMFV). Tyr247 contacts O2. The Cu cation site is built by His292 and His293. A run of 2 helical transmembrane segments spans residues 306–326 (YFGGVSILIGLPTCVKLFNWI) and 340–360 (VYFVIMFIFMFLIGAVTGLFL). 2 residues coordinate Mg(2+): His370 and Asp371. Residue His378 participates in heme a3 binding. The next 5 membrane-spanning stretches (helical) occupy residues 379–399 (FHYVLSLGAVVGFFTGFIHFL), 402–422 (WLPIELYLFWMFYFISTLFIG), 460–480 (MLLLASLILFLCALFCVFLFW), 484–504 (LFFVSLFVFSLYCFFYFSTWL), and 520–540 (IVLDYLFLILCFCFVFFIFFW). Residue His380 participates in Fe(II)-heme a binding.

The protein belongs to the heme-copper respiratory oxidase family. Component of the cytochrome c oxidase (complex IV, CIV), a multisubunit enzyme composed of a catalytic core of 3 subunits and several supernumerary subunits. The complex exists as a monomer or a dimer and forms supercomplexes (SCs) in the inner mitochondrial membrane with ubiquinol-cytochrome c oxidoreductase (cytochrome b-c1 complex, complex III, CIII). Heme serves as cofactor. Requires Cu cation as cofactor.

It is found in the mitochondrion inner membrane. The enzyme catalyses 4 Fe(II)-[cytochrome c] + O2 + 8 H(+)(in) = 4 Fe(III)-[cytochrome c] + 2 H2O + 4 H(+)(out). It participates in energy metabolism; oxidative phosphorylation. Functionally, component of the cytochrome c oxidase, the last enzyme in the mitochondrial electron transport chain which drives oxidative phosphorylation. The respiratory chain contains 3 multisubunit complexes succinate dehydrogenase (complex II, CII), ubiquinol-cytochrome c oxidoreductase (cytochrome b-c1 complex, complex III, CIII) and cytochrome c oxidase (complex IV, CIV), that cooperate to transfer electrons derived from NADH and succinate to molecular oxygen, creating an electrochemical gradient over the inner membrane that drives transmembrane transport and the ATP synthase. Cytochrome c oxidase is the component of the respiratory chain that catalyzes the reduction of oxygen to water. Electrons originating from reduced cytochrome c in the intermembrane space (IMS) are transferred via the dinuclear copper A center (CU(A)) of subunit 2 and heme A of subunit 1 to the active site in subunit 1, a binuclear center (BNC) formed by heme A3 and copper B (CU(B)). The BNC reduces molecular oxygen to 2 water molecules using 4 electrons from cytochrome c in the IMS and 4 protons from the mitochondrial matrix. This chain is Cytochrome c oxidase subunit 1 (COI), found in Leishmania tarentolae (Sauroleishmania tarentolae).